The primary structure comprises 524 residues: N-acetylgalactosamine-6-sulfatase (524 aa).

An N-terminal signal peptide occupies residues Met1–Gly27. A catalytic domain region spans residues Ala28–Asp381. 3 residues coordinate Ca(2+): Asp40, Asp41, and Cys80. The active-site Nucleophile is the Cys80. At Cys80 the chain carries 3-oxoalanine (Cys). The active site involves His143. N-linked (GlcNAc...) asparagine glycosylation is present at Asn205. Ca(2+) contacts are provided by Asp290 and Asn291. Residues Cys310 and Cys421 are joined by a disulfide bond. N-linked (GlcNAc...) asparagine glycosylation is present at Asn425. 2 cysteine pairs are disulfide-bonded: Cys491–Cys520 and Cys503–Cys509.

Belongs to the sulfatase family. In terms of assembly, homodimer. The cofactor is Ca(2+). The conversion to 3-oxoalanine (also known as C-formylglycine, FGly), of a serine or cysteine residue in prokaryotes and of a cysteine residue in eukaryotes, is critical for catalytic activity.

Its subcellular location is the lysosome. The enzyme catalyses Hydrolysis of the 6-sulfate groups of the N-acetyl-D-galactosamine 6-sulfate units of chondroitin sulfate and of the D-galactose 6-sulfate units of keratan sulfate.. This Rattus norvegicus (Rat) protein is N-acetylgalactosamine-6-sulfatase (Galns).